The chain runs to 30 residues: YCQKWMWTCDSERKCCEGMVCRLWCKKKLW.

3 disulfide bridges follow: Cys2–Cys16, Cys9–Cys21, and Cys15–Cys25. Residues 26–30 form a flexible tail region important for ability to inhibit Nav channel region; it reads KKKLW. The tract at residues 29-30 is hydrophobic dyad that anchors the toxin into the membrane while positioning it over the S3 helix of Nav1.7/SCN9A; the sequence is LW.

It belongs to the neurotoxin 30 (phrixotoxin) family. As to expression, expressed by the venom gland.

Its subcellular location is the secreted. In terms of biological role, gating-modifier toxin that targets voltage-gated sodium channels with a selective activity on Nav1.7/SCN9A (IC(50)=1-1.5 nM). It inhibits both activation and inactivation. For inhibition of activation, it is 100-fold more selective for Nav1.7/SCN9A (IC(50)=0.26-3) than for other sodium channels (Nav1.2/SCN2A (IC(50)=40-540 nM), Nav1.3/SCN3A (IC(50)=102 nM), Nav1.4/SCN4A (IC(50)=30-39 nM), Nav1.5/SCN5A (IC(50)=19-90 nM), Nav1.6/SCN8A (IC(50)=26 nM), and Nav1.8/SCN10A (IC(50)=146 nM)). For inhibition of inactivation, it is 20-fold more potent in inhibiting inactivation on Nav1.7/SCN9A (IC(50)=250 nM) than other channels (about 4.6 uM for all channels). It also weakly inhibits Cav1.2/CACNA1C and Cav3.2/CACNA1H (29% block at 1 uM). It inhibits Nav1.7/SCN9A activation by interacting with DII and impairs Nav1.7/SCN9A inactivation by interacting with DIV. It docks on top of the DII S3 helix Nav1.7/SCN9A. It is about 60-fold less active on Nav1.7/SCN9A at depolarized potential (0 mV; IC(50)=15 nM), compared to -120 mV potential (IC(50)=0.26 nM). This toxin binds to lipid membrane. This ability correlates with hNav1.7/SCN9A inhibition, showing that membrane binding is the first step in the inhibitory mechanism of this toxin. It inhibits Nav1.2/SCN2A less potently when it is coexpressed with SCN2B or SCN4B than when it is expressed alone, showing that beta subunits (SCN2B and SCN4B) have a protective effect. In Thrixopelma pruriens (Peruvian green velvet tarantula), this protein is Beta/omega-theraphotoxin-Tp2a.